Here is a 66-residue protein sequence, read N- to C-terminus: Large ribosomal subunit protein uL29 (66 aa).

Belongs to the universal ribosomal protein uL29 family.

This is Large ribosomal subunit protein uL29 from Helicobacter pylori (strain P12).